Reading from the N-terminus, the 89-residue chain is Small ribosomal subunit protein uS17 (89 aa).

This sequence belongs to the universal ribosomal protein uS17 family. In terms of assembly, part of the 30S ribosomal subunit.

In terms of biological role, one of the primary rRNA binding proteins, it binds specifically to the 5'-end of 16S ribosomal RNA. The sequence is that of Small ribosomal subunit protein uS17 from Xylella fastidiosa (strain Temecula1 / ATCC 700964).